The following is a 264-amino-acid chain: Phosphatidylinositol transfer protein 1 (264 aa).

The disordered stretch occupies residues 151-174; it reads NYKETEDPTKIRSEKANRGPLEEE. A coiled-coil region spans residues 238 to 264; the sequence is VRAFELKTKEDLKKKLEEKDENKAAEK.

This sequence belongs to the PtdIns transfer protein family. PI transfer class I subfamily. Post-translationally, phosphorylated in response to activation of rasG.

The protein resides in the cytoplasm. Its subcellular location is the golgi apparatus. Functionally, catalyzes the transfer of PtdIns and phosphatidylcholine between membranes. The polypeptide is Phosphatidylinositol transfer protein 1 (pitA) (Dictyostelium discoideum (Social amoeba)).